Reading from the N-terminus, the 154-residue chain is Small ribosomal subunit protein uS13m (154 aa).

The transit peptide at 1-30 (MLGLRRSATTLFDISQSLLRNVTFHGLRVQ) directs the protein to the mitochondrion. Residues 121–154 (RHGLPCRGQRTSTNARTKKGKAVAIAGKKKAPRK) are disordered. Residues 136–154 (RTKKGKAVAIAGKKKAPRK) are compositionally biased toward basic residues.

This sequence belongs to the universal ribosomal protein uS13 family. Part of the small ribosomal subunit.

It localises to the mitochondrion. Functionally, located at the top of the head of the small subunit, it contacts several helices of the 18S rRNA. This Arabidopsis thaliana (Mouse-ear cress) protein is Small ribosomal subunit protein uS13m (RPS13).